We begin with the raw amino-acid sequence, 587 residues long: MESNGGGGGSPKEAAVVVPSSGDATLGGHLARRLVQVGVSDVFAVPGDFNLTLLDHLIAEPGLRVVGCCNELNAGYAADGYARARGVGACAVTFTVGGLSVLNAIGGAYSENLPLICIVGGPNSNDYGTNRILHHTIGLPDFSQELRCFQPLTCYQAVVNNLDDAHDQIDRAISTAIRESKPVYISVSCNLPAVPHPTFSRDPVPYFLSPRLSNQASLHAALDATLAFLDKAVKPVLVAGPKLRVAKAGGAFVDLADASGHAVAAMPSAKGLVPETLPRFIGTYWGAVSTAFCAEIVESADAYLFAGPIFNDYSSVGYSCLLKKEKAVVVQPDRVTVGNGPAFGCVMMRDFLSELAKRVRKNTTAFDNYKRIFVPEGQLPECEAGEALRVNVLFKHIQRMIGGTEIGAVMAETGDSWFNCQKLRLPEGCGYEFQMQYGSIGWSVGALLGYAQAVQKRVVACIGDGSFQVTAQDVSTMLRCGQRSIIFLINNGGYTIEVEIHDGPYNVIKNWDYVGLVNAIHNGEGRCWATRVRCEEELEAAIATATGDKADSLCFIEVVAHKDDTSKELLEWGSRVSAANSRPPNPQ.

Residues D48 and H135 each coordinate substrate. Residues 415–496 (DSWFNCQKLR…FLINNGGYTI (82 aa)) form a thiamine pyrophosphate binding region. Mg(2+) is bound by residues D464, N491, and G493. E497 contacts substrate.

It belongs to the TPP enzyme family. In terms of assembly, homotetramer. A metal cation is required as a cofactor. The cofactor is thiamine diphosphate.

It catalyses the reaction a 2-oxocarboxylate + H(+) = an aldehyde + CO2. The protein is Pyruvate decarboxylase 3 (PDC3) of Oryza sativa subsp. japonica (Rice).